Consider the following 75-residue polypeptide: Gas vesicle protein S (75 aa).

The protein belongs to the gas vesicle GvpA family.

Its subcellular location is the gas vesicle. Its function is as follows. Probably a minor component of the gas vesicle. Gas vesicles are hollow, gas filled proteinaceous nanostructures found in some microorganisms. It is not clear what function gas vesicles perform in soil bacteria. This Streptomyces sp. (strain CB03234) protein is Gas vesicle protein S.